We begin with the raw amino-acid sequence, 463 residues long: Asparagine--tRNA ligase (463 aa).

Belongs to the class-II aminoacyl-tRNA synthetase family. Homodimer.

It is found in the cytoplasm. The catalysed reaction is tRNA(Asn) + L-asparagine + ATP = L-asparaginyl-tRNA(Asn) + AMP + diphosphate + H(+). The protein is Asparagine--tRNA ligase of Clostridium acetobutylicum (strain ATCC 824 / DSM 792 / JCM 1419 / IAM 19013 / LMG 5710 / NBRC 13948 / NRRL B-527 / VKM B-1787 / 2291 / W).